We begin with the raw amino-acid sequence, 55 residues long: UPF0391 membrane protein RALTA_A0099 (55 aa).

2 consecutive transmembrane segments (helical) span residues 5–25 and 30–50; these read ALVF…GIAA and IAKI…VMGL.

It belongs to the UPF0391 family.

It localises to the cell membrane. The sequence is that of UPF0391 membrane protein RALTA_A0099 from Cupriavidus taiwanensis (strain DSM 17343 / BCRC 17206 / CCUG 44338 / CIP 107171 / LMG 19424 / R1) (Ralstonia taiwanensis (strain LMG 19424)).